The sequence spans 208 residues: Outer-membrane lipoprotein carrier protein (208 aa).

Positions 1-21 (MPAFRYLIVLPLLCWGFASQA) are cleaved as a signal peptide.

The protein belongs to the LolA family. In terms of assembly, monomer.

It localises to the periplasm. Its function is as follows. Participates in the translocation of lipoproteins from the inner membrane to the outer membrane. Only forms a complex with a lipoprotein if the residue after the N-terminal Cys is not an aspartate (The Asp acts as a targeting signal to indicate that the lipoprotein should stay in the inner membrane). The chain is Outer-membrane lipoprotein carrier protein from Methylococcus capsulatus (strain ATCC 33009 / NCIMB 11132 / Bath).